We begin with the raw amino-acid sequence, 279 residues long: Protein gustavus (279 aa).

One can recognise a B30.2/SPRY domain in the interval 36–233 (PARIDILLDM…ITMRYIGGLD (198 aa)). The 46-residue stretch at 234 to 279 (PEPLPLMDLCRRTIRQKIGRTNLEEHIQQLQLPLSMKTYLLYKNRR) folds into the SOCS box domain. An involved in binding to the Elongin BC complex region spans residues 236 to 279 (PLPLMDLCRRTIRQKIGRTNLEEHIQQLQLPLSMKTYLLYKNRR).

This sequence belongs to the SPSB family. In terms of assembly, interacts (via B30.2/SPRY domain) with vas; this interaction may be necessary for the transport of vas to the posterior pole of the oocyte. Interacts with Cul-5. May associate with the Elongin BC complex composed of Elongin-B and Elongin-C. In terms of tissue distribution, expressed in ovaries, primarily in nurse cells and oocytes (at protein level).

It is found in the cytoplasm. Its subcellular location is the nucleus. In terms of biological role, involved in the localization of vas to the posterior pole of the oocyte. Required maternally in the germ line for efficient primordial germ cell formation. In Drosophila melanogaster (Fruit fly), this protein is Protein gustavus (gus).